A 440-amino-acid polypeptide reads, in one-letter code: ATP-dependent protease ATPase subunit HslU (440 aa).

ATP is bound by residues I18, 60 to 65 (GVGKTE), D252, E318, and R390.

This sequence belongs to the ClpX chaperone family. HslU subfamily. As to quaternary structure, a double ring-shaped homohexamer of HslV is capped on each side by a ring-shaped HslU homohexamer. The assembly of the HslU/HslV complex is dependent on binding of ATP.

It localises to the cytoplasm. Its function is as follows. ATPase subunit of a proteasome-like degradation complex; this subunit has chaperone activity. The binding of ATP and its subsequent hydrolysis by HslU are essential for unfolding of protein substrates subsequently hydrolyzed by HslV. HslU recognizes the N-terminal part of its protein substrates and unfolds these before they are guided to HslV for hydrolysis. This is ATP-dependent protease ATPase subunit HslU from Acidithiobacillus ferrooxidans (strain ATCC 23270 / DSM 14882 / CIP 104768 / NCIMB 8455) (Ferrobacillus ferrooxidans (strain ATCC 23270)).